Here is a 404-residue protein sequence, read N- to C-terminus: Odorant receptor 67c (404 aa).

The Cytoplasmic segment spans residues 1–45; that stretch reads METAKDNTARTFMELMRVPVQFYRTIGEDIYAHRSTNPLKSLLFK. A helical transmembrane segment spans residues 46–66; the sequence is IYLYAGFINFNLLVIGELVFF. Residues 67–79 lie on the Extracellular side of the membrane; the sequence is YNSIQDFETIRLA. The chain crosses the membrane as a helical span at residues 80–100; the sequence is IAVAPCIGFSLVADFKQAAMI. Over 101-139 the chain is Cytoplasmic; sequence RGKKTLIMLLDDLENMHPKTLAKQMEYKLPDFEKTMKRV. The helical transmembrane segment at 140–160 threads the bilayer; the sequence is INIFTFLCLAYTTTFSFYPAI. The Extracellular portion of the chain corresponds to 161–204; the sequence is KASVKFNFLGYDTFDRNFGFLIWFPFDATRNNLIYWIMYWDIAH. A helical membrane pass occupies residues 205–225; that stretch reads GAYLAGIAFLCADLLLVVVIT. Residues 226–277 are Cytoplasmic-facing; the sequence is QICMHFNYISMRLEDHPCNSNEDKENIEFLIGIIRYHDKCLKLCEHVNDLYS. A helical transmembrane segment spans residues 278 to 298; that stretch reads FSLLLNFLMASMQICFIAFQV. At 299 to 304 the chain is on the extracellular side; the sequence is TESTVE. A helical membrane pass occupies residues 305-326; sequence VIIIYCIFLMTSMVQVFMVCYY. The Cytoplasmic portion of the chain corresponds to 327–373; it reads GDTLIAASLKVGDAAYNQKWFQCSKSYCTMLKLLIMRSQKPASIRPP. The chain crosses the membrane as a helical span at residues 374–394; it reads TFPPISLVTYMKVISMSYQFF. The Extracellular segment spans residues 395-404; sequence ALLRTTYSNN.

Belongs to the insect chemoreceptor superfamily. Heteromeric odorant receptor channel (TC 1.A.69) family. Or49a subfamily. Interacts with Orco. Complexes exist early in the endomembrane system in olfactory sensory neurons (OSNs), coupling these complexes to the conserved ciliary trafficking pathway. Expressed in olfactory sensory neurons in the antenna.

Its subcellular location is the cell membrane. Its function is as follows. Odorant receptor which mediates acceptance or avoidance behavior, depending on its substrates. The odorant receptor repertoire encodes a large collection of odor stimuli that vary widely in identity, intensity, and duration. May form a complex with Orco to form odorant-sensing units, providing sensitive and prolonged odorant signaling and calcium permeability. This is Odorant receptor 67c (Or67c) from Drosophila melanogaster (Fruit fly).